Consider the following 126-residue polypeptide: Anti-adapter protein IraD (126 aa).

The protein belongs to the GpW/Gp25 family. IraD subfamily. As to quaternary structure, interacts with RssB.

It is found in the cytoplasm. Functionally, inhibits RpoS proteolysis by regulating RssB activity, thereby increasing the stability of the sigma stress factor RpoS during oxidative stress. Its effect on RpoS stability is due to its interaction with RssB, which probably blocks the interaction of RssB with RpoS, and the consequent delivery of the RssB-RpoS complex to the ClpXP protein degradation pathway. The sequence is that of Anti-adapter protein IraD from Salmonella enteritidis PT4 (strain P125109).